Consider the following 336-residue polypeptide: Protein-glutamate methylesterase/protein-glutamine glutaminase 3 (336 aa).

A Response regulatory domain is found at 2-119; sequence KIAIVNDMPM…PNPKEAAAPL (118 aa). A 4-aspartylphosphate modification is found at Asp-53. A CheB-type methylesterase domain is found at 147–336; sequence PARRDRLVAI…APRLVEVFTQ (190 aa). Active-site residues include Ser-159, His-186, and Asp-279.

The protein belongs to the CheB family. In terms of processing, phosphorylated by CheA. Phosphorylation of the N-terminal regulatory domain activates the methylesterase activity.

The protein resides in the cytoplasm. It carries out the reaction [protein]-L-glutamate 5-O-methyl ester + H2O = L-glutamyl-[protein] + methanol + H(+). It catalyses the reaction L-glutaminyl-[protein] + H2O = L-glutamyl-[protein] + NH4(+). In terms of biological role, involved in chemotaxis. Part of a chemotaxis signal transduction system that modulates chemotaxis in response to various stimuli. Catalyzes the demethylation of specific methylglutamate residues introduced into the chemoreceptors (methyl-accepting chemotaxis proteins or MCP) by CheR. Also mediates the irreversible deamidation of specific glutamine residues to glutamic acid. This Pseudomonas savastanoi pv. phaseolicola (strain 1448A / Race 6) (Pseudomonas syringae pv. phaseolicola (strain 1448A / Race 6)) protein is Protein-glutamate methylesterase/protein-glutamine glutaminase 3.